Here is a 428-residue protein sequence, read N- to C-terminus: Enolase (428 aa).

A (2R)-2-phosphoglycerate-binding site is contributed by Gln-163. Glu-205 acts as the Proton donor in catalysis. Positions 242, 285, and 312 each coordinate Mg(2+). The (2R)-2-phosphoglycerate site is built by Lys-337, Arg-366, Ser-367, and Lys-388. Catalysis depends on Lys-337, which acts as the Proton acceptor.

This sequence belongs to the enolase family. It depends on Mg(2+) as a cofactor.

It localises to the cytoplasm. Its subcellular location is the secreted. The protein resides in the cell surface. The catalysed reaction is (2R)-2-phosphoglycerate = phosphoenolpyruvate + H2O. It participates in carbohydrate degradation; glycolysis; pyruvate from D-glyceraldehyde 3-phosphate: step 4/5. Catalyzes the reversible conversion of 2-phosphoglycerate (2-PG) into phosphoenolpyruvate (PEP). It is essential for the degradation of carbohydrates via glycolysis. This chain is Enolase, found in Neisseria meningitidis serogroup A / serotype 4A (strain DSM 15465 / Z2491).